The chain runs to 221 residues: MMRWNFSPEDLSSIFRNNSTLPKITVKNVDIEFTIPTAVTIEVEPSPVQQDNPPISSEQADFSLAQPDSPSLPLESPEESESSAQQEATAQTPNPPKEVEPSPVQQEFPAEPTEPAKEVEPSATQQEASGHPLKSTKEVNPPPKQEIPAQPSEPPEKVELSPVLQQAPTQLLEPLKKVECSPVQQAVPAQSSEPSIVVEPSPVQQIAHLCLQSSLRKWNPL.

Residues 40 to 162 (TIEVEPSPVQ…EPPEKVELSP (123 aa)) form a disordered region. Residues 47-60 (PVQQDNPPISSEQA) show a composition bias toward polar residues. Over residues 82–92 (SSAQQEATAQT) the composition is skewed to low complexity.

This is an uncharacterized protein from Homo sapiens (Human).